Reading from the N-terminus, the 671-residue chain is Phenol 2-monooxygenase (671 aa).

FAD is bound by residues 10 to 43 (DVLI…RIFD) and 295 to 305 (LQEGRVFLAGD).

Belongs to the PheA/TfdB FAD monooxygenase family. The cofactor is FAD.

The protein localises to the cytoplasm. The enzyme catalyses phenol + NADPH + O2 + H(+) = catechol + NADP(+) + H2O. It participates in aromatic compound metabolism; phenol degradation. In terms of biological role, hydroxylates phenol to catechol. Also acts on cresols. The sequence is that of Phenol 2-monooxygenase (tbuD) from Ralstonia pickettii (Burkholderia pickettii).